The chain runs to 87 residues: MANVSALLTIALLLCSTLMCTARPEPAISISITTAADPCNMEKKIEGKLDDMHMVDENCGADDEDCLMRRTLVAHTDYIYTQKKKHP.

An N-terminal signal peptide occupies residues 1–22; it reads MANVSALLTIALLLCSTLMCTA. Positions 23–77 are excised as a propeptide; that stretch reads RPEPAISISITTAADPCNMEKKIEGKLDDMHMVDENCGADDEDCLMRRTLVAHTD. Sulfotyrosine is present on residues tyrosine 78 and tyrosine 80. Residues 83-87 constitute a propeptide that is removed on maturation; sequence KKKHP.

This sequence belongs to the phytosulfokine family. In terms of processing, sulfation is important for activity and for the binding to a putative membrane receptor. PSK-beta is an enzymatic derivative of PSK-alpha. As to expression, expressed in stems, roots and leaves.

Its subcellular location is the secreted. Functionally, promotes plant cell differentiation, organogenesis and somatic embryogenesis as well as cell proliferation. The sequence is that of Phytosulfokines 2 (PSK2) from Arabidopsis thaliana (Mouse-ear cress).